The chain runs to 786 residues: Leucine-rich repeat extensin-like protein 2 (786 aa).

Residues 1–28 form the signal peptide; the sequence is MLLFPSTSLRLFFFLFLLFSSCFLQIRG. Residues Asn-73 and Asn-79 are each glycosylated (N-linked (GlcNAc...) asparagine). LRR repeat units lie at residues 100–124, 125–147, 149–172, 173–196, 198–219, 221–243, 244–267, 268–291, and 292–315; these read TRVVAGIDLNHADMAGYLPRELGLL, TDLALFHLNSNRFCGEVPLTFKH, KLLFELDLSNNRFVGKFPNVVLSL, PSLKFLDLRYNEFEGSIPSKLFDK, LDAIFLNHNRFMFGIPENMGNS, VSALVLADNDLGGCIPGSIGLMG, KTLNEIILSNDNLTGCLPPQIGNL, KNVTVFDISFNRLSGPLPSSIGNM, and KSLEQLNVANNRFTGVIPSSICQL. N-linked (GlcNAc...) asparagine glycans are attached at residues Asn-255 and Asn-269. N-linked (GlcNAc...) asparagine glycosylation is found at Asn-320 and Asn-346. Disordered stretches follow at residues 352–372, 390–589, 624–645, and 694–786; these read IDGKEDQRSSKECSSPASRSV, FKMS…YYAV, PPVYYSPVTQSPPPPPPVYYPP, and PPPS…IPYY. Positions 353–362 are enriched in basic and acidic residues; it reads DGKEDQRSSK. Residues 384–786 form a contains the Ser-Pro(4) repeats region; the sequence is SPPPPSFKMS…SPPPPSIPYY (403 aa). Pro residues-rich tracts occupy residues 460–477, 487–542, and 566–589; these read YPPPPPPPEYEPSPPPPS, YPPP…PPPK, and SPPPPTYYATQSPPPPPPPTYYAV. Pro residues-rich tracts occupy residues 694–713, 720–737, 752–769, and 777–786; these read PPPSPVYYPPVTQSPPPPST, PASPNQSPPPEYQSPPPK, PTPPSLPPPYYEDTPLPP, and SPPPPSIPYY.

Post-translationally, hydroxylated on proline residues in the S-P-P-P-P repeat. O-glycosylated on hydroxyprolines. In terms of tissue distribution, mostly expressed in roots, also present in stems at low levels. In roots, confined to differentiation zones, the collet, and meristematic cells of tips.

It is found in the secreted. The protein localises to the cell wall. Its function is as follows. Modulates cell morphogenesis by regulating cell wall formation and assembly, and/or growth polarization. Together with LRX2, component of the extracellular mechanism regulating root hair morphogenesis and elongation. The polypeptide is Leucine-rich repeat extensin-like protein 2 (LRX2) (Arabidopsis thaliana (Mouse-ear cress)).